Reading from the N-terminus, the 299-residue chain is Apolipoprotein E (299 aa).

Positions 1 to 18 (MKVLCTVLVVTLLAGCRA) are cleaved as a signal peptide. 7 consecutive repeat copies span residues 74-95 (VLME…QELV), 96-117 (PMAE…ARLG), 118-139 (ADME…AMLG), 140-161 (QSAD…KRML), 162-183 (RDAE…EGAE), 184-205 (RGVS…VRAA), and 224-245 (GRLE…EQME). Positions 74 to 245 (VLMEDTMKAV…RLEEMREQME (172 aa)) are 8 X 22 AA approximate tandem repeats. M137 carries the methionine sulfoxide modification. Phosphoserine is present on S141. The segment at 152 to 162 (HLRKLRKRMLR) is LDL and other lipoprotein receptors binding. Residue 156 to 159 (LRKR) coordinates heparin. Residues 204-273 (AALTGQPLQE…GWFEPMVEDM (70 aa)) are lipid-binding and lipoprotein association. Heparin is bound at residue 219 to 226 (GKQLRGRL). The specificity for association with VLDL stretch occupies residues 261–273 (RLKGWFEPMVEDM).

This sequence belongs to the apolipoprotein A1/A4/E family. In terms of assembly, homotetramer. May interact with ABCA1; functionally associated with ABCA1 in the biogenesis of HDLs. May interact with APP/A4 amyloid-beta peptide; the interaction is extremely stable in vitro but its physiological significance is unclear. May interact with MAPT. May interact with MAP2. In the cerebrospinal fluid, interacts with secreted SORL1. Interacts with PMEL; this allows the loading of PMEL luminal fragment on ILVs to induce fibril nucleation. APOE exists as multiple glycosylated and sialylated glycoforms within cells and in plasma. The extent of glycosylation and sialylation are tissue and context specific. Post-translationally, glycated in plasma VLDL. In terms of processing, phosphorylated by FAM20C in the extracellular medium.

It localises to the secreted. Its subcellular location is the extracellular space. The protein localises to the extracellular matrix. The protein resides in the extracellular vesicle. It is found in the endosome. It localises to the multivesicular body. Its function is as follows. APOE is an apolipoprotein, a protein associating with lipid particles, that mainly functions in lipoprotein-mediated lipid transport between organs via the plasma and interstitial fluids. APOE is a core component of plasma lipoproteins and is involved in their production, conversion and clearance. Apolipoproteins are amphipathic molecules that interact both with lipids of the lipoprotein particle core and the aqueous environment of the plasma. As such, APOE associates with chylomicrons, chylomicron remnants, very low density lipoproteins (VLDL) and intermediate density lipoproteins (IDL) but shows a preferential binding to high-density lipoproteins (HDL). It also binds a wide range of cellular receptors including the LDL receptor/LDLR, the LDL receptor-related proteins LRP1, LRP2 and LRP8 and the very low-density lipoprotein receptor/VLDLR that mediate the cellular uptake of the APOE-containing lipoprotein particles. Finally, APOE also has a heparin-binding activity and binds heparan-sulfate proteoglycans on the surface of cells, a property that supports the capture and the receptor-mediated uptake of APOE-containing lipoproteins by cells. A main function of APOE is to mediate lipoprotein clearance through the uptake of chylomicrons, VLDLs, and HDLs by hepatocytes. APOE is also involved in the biosynthesis by the liver of VLDLs as well as their uptake by peripheral tissues ensuring the delivery of triglycerides and energy storage in muscle, heart and adipose tissues. By participating in the lipoprotein-mediated distribution of lipids among tissues, APOE plays a critical role in plasma and tissues lipid homeostasis. APOE is also involved in two steps of reverse cholesterol transport, the HDLs-mediated transport of cholesterol from peripheral tissues to the liver, and thereby plays an important role in cholesterol homeostasis. First, it is functionally associated with ABCA1 in the biogenesis of HDLs in tissues. Second, it is enriched in circulating HDLs and mediates their uptake by hepatocytes. APOE also plays an important role in lipid transport in the central nervous system, regulating neuron survival and sprouting. The chain is Apolipoprotein E (APOE) from Octodon degus (Degu).